The sequence spans 428 residues: Histidinol dehydrogenase (428 aa).

Residues tyrosine 129, glutamine 188, and asparagine 211 each coordinate NAD(+). Residues serine 234, glutamine 256, and histidine 259 each contribute to the substrate site. The Zn(2+) site is built by glutamine 256 and histidine 259. Residues glutamate 323 and histidine 324 each act as proton acceptor in the active site. Positions 324, 357, 411, and 416 each coordinate substrate. Aspartate 357 serves as a coordination point for Zn(2+). Zn(2+) is bound at residue histidine 416.

The protein belongs to the histidinol dehydrogenase family. Requires Zn(2+) as cofactor.

The catalysed reaction is L-histidinol + 2 NAD(+) + H2O = L-histidine + 2 NADH + 3 H(+). It participates in amino-acid biosynthesis; L-histidine biosynthesis; L-histidine from 5-phospho-alpha-D-ribose 1-diphosphate: step 9/9. Functionally, catalyzes the sequential NAD-dependent oxidations of L-histidinol to L-histidinaldehyde and then to L-histidine. This chain is Histidinol dehydrogenase, found in Caulobacter vibrioides (strain ATCC 19089 / CIP 103742 / CB 15) (Caulobacter crescentus).